We begin with the raw amino-acid sequence, 121 residues long: Dihydroneopterin aldolase (121 aa).

Substrate is bound by residues E25 and M114.

It belongs to the archaeal dihydroneopterin aldolase family. In terms of assembly, homotetramer.

It catalyses the reaction 7,8-dihydroneopterin = 6-hydroxymethyl-7,8-dihydropterin + glycolaldehyde. Its pathway is cofactor biosynthesis; 5,6,7,8-tetrahydromethanopterin biosynthesis. In terms of biological role, catalyzes the conversion of 7,8-dihydroneopterin (H2Neo) to 6-hydroxymethyl-7,8-dihydropterin (6-HMD). The chain is Dihydroneopterin aldolase from Methanocaldococcus jannaschii (strain ATCC 43067 / DSM 2661 / JAL-1 / JCM 10045 / NBRC 100440) (Methanococcus jannaschii).